The primary structure comprises 528 residues: MASMISAEKRNPAIVILDFGSQYSELIARRIRETEVYSLVMSYTTSADQLRSLKPKGIILSGGPGSVYEEGAPYCDPEIFNLGIPVLGVCYGMQLMVHELGGSVKPAAGKAEYGKAPLEVDDPTALLTNVISGSTMWMSHGDSVQKLPKGFVRLAHTSNTLEAAIALHDKSFYGVQFHPEVVHSTHGMVVIRNFVYDICSCEPDWTTNLFIDEAVSQVQQHVGDKKVLLALSGGVDSSTLAFLLNKAIGPQLTCMFIDQGFMRKGEPEFLMSFFDEKFKINVEYINARERFISQLKGVTDPEQKRKIIGREFIRVFEEESLRLGPFDYLAQGTLYPDVIESSGTNIDPKTGERIAVKIKSHHNVGGLPKDLQFKLVEPLRRLFKDEVRKVGKSLGLPDEIVRRHPFPGPGLAIRILGEVTHEKLNCLRDADLIVREEINNAGLYNKIWQAFAVLLPVYSVGVMGDQRTYAWPIVVRCVSSEDGMTADWSRLPYAVLEKISNRIVNEVEGVNRVVLDITSKPPGTIEWE.

Positions A13–D204 constitute a Glutamine amidotransferase type-1 domain. The Nucleophile role is filled by C90. Catalysis depends on residues H178 and E180. In terms of domain architecture, GMPS ATP-PPase spans W205 to R403. S232–S238 is a binding site for ATP.

In terms of assembly, homodimer.

It catalyses the reaction XMP + L-glutamine + ATP + H2O = GMP + L-glutamate + AMP + diphosphate + 2 H(+). Its pathway is purine metabolism; GMP biosynthesis; GMP from XMP (L-Gln route): step 1/1. Catalyzes the synthesis of GMP from XMP. The protein is GMP synthase [glutamine-hydrolyzing] of Prochlorococcus marinus (strain NATL2A).